A 271-amino-acid polypeptide reads, in one-letter code: Enolase-phosphatase E1 (271 aa).

The Mg(2+) site is built by Asp-16 and Glu-18. Substrate contacts are provided by residues Ser-150–Ser-151 and Lys-199. Asp-226 serves as a coordination point for Mg(2+).

This sequence belongs to the HAD-like hydrolase superfamily. MasA/MtnC family. As to quaternary structure, monomer. The cofactor is Mg(2+).

The protein resides in the cytoplasm. Its subcellular location is the nucleus. The enzyme catalyses 5-methylsulfanyl-2,3-dioxopentyl phosphate + H2O = 1,2-dihydroxy-5-(methylsulfanyl)pent-1-en-3-one + phosphate. It functions in the pathway amino-acid biosynthesis; L-methionine biosynthesis via salvage pathway; L-methionine from S-methyl-5-thio-alpha-D-ribose 1-phosphate: step 3/6. The protein operates within amino-acid biosynthesis; L-methionine biosynthesis via salvage pathway; L-methionine from S-methyl-5-thio-alpha-D-ribose 1-phosphate: step 4/6. In terms of biological role, bifunctional enzyme that catalyzes the enolization of 2,3-diketo-5-methylthiopentyl-1-phosphate (DK-MTP-1-P) into the intermediate 2-hydroxy-3-keto-5-methylthiopentenyl-1-phosphate (HK-MTPenyl-1-P), which is then dephosphorylated to form the acireductone 1,2-dihydroxy-3-keto-5-methylthiopentene (DHK-MTPene). In Candida dubliniensis (strain CD36 / ATCC MYA-646 / CBS 7987 / NCPF 3949 / NRRL Y-17841) (Yeast), this protein is Enolase-phosphatase E1.